The chain runs to 578 residues: Polypeptide N-acetylgalactosaminyltransferase 4 (578 aa).

The Cytoplasmic segment spans residues 1–12 (MAVRWTWAGKSC). A helical; Signal-anchor for type II membrane protein transmembrane segment spans residues 13 to 35 (LLLALLTLAYILVEFSVSTLYAS). Residues 36 to 578 (PGAGGARELG…DKNQLWRFEK (543 aa)) are Lumenal-facing. Disulfide bonds link Cys124/Cys357, Cys348/Cys421, Cys457/Cys477, Cys503/Cys518, and Cys547/Cys565. The tract at residues 134 to 243 (LPTTSVIIAF…TGWLEPLLER (110 aa)) is catalytic subdomain A. Residues Asp175 and Arg204 each contribute to the substrate site. 2 residues coordinate Mn(2+): Asp227 and His229. Residues 303–365 (PIRSPTMAGG…PCSHVGHVFP (63 aa)) are catalytic subdomain B. Trp334 serves as a coordination point for substrate. His362 is a Mn(2+) binding site. Tyr370 serves as a coordination point for substrate. Residues 444-577 (WHGAIRSMGI…LDKNQLWRFE (134 aa)) form the Ricin B-type lectin domain. An N-linked (GlcNAc...) asparagine glycan is attached at Asn471.

The protein belongs to the glycosyltransferase 2 family. GalNAc-T subfamily. It depends on Mn(2+) as a cofactor. Highly expressed in sublingual gland, stomach, colon, small intestine and cervix. Expressed at intermediate levels in kidney, ovary, lung and uterus. Weakly expressed in spleen, liver, heart and brain. Not expressed in submandibular and parotid glands, skeletal muscle and testis.

It is found in the golgi apparatus membrane. It catalyses the reaction L-seryl-[protein] + UDP-N-acetyl-alpha-D-galactosamine = a 3-O-[N-acetyl-alpha-D-galactosaminyl]-L-seryl-[protein] + UDP + H(+). The enzyme catalyses L-threonyl-[protein] + UDP-N-acetyl-alpha-D-galactosamine = a 3-O-[N-acetyl-alpha-D-galactosaminyl]-L-threonyl-[protein] + UDP + H(+). Its pathway is protein modification; protein glycosylation. Catalyzes the initial reaction in O-linked oligosaccharide biosynthesis, the transfer of an N-acetyl-D-galactosamine residue to a serine or threonine residue on the protein receptor. Has a highest activity toward EA2 peptide substrate and a much lower activity with EPO-T, Muc2, Muc1a, Muc1b. This Mus musculus (Mouse) protein is Polypeptide N-acetylgalactosaminyltransferase 4 (Galnt4).